The primary structure comprises 745 residues: Receptor-type adenylate cyclase (745 aa).

At 1 to 341 the chain is on the extracellular side; it reads GELGQTDRFF…NEGALTRAQL (341 aa). Residues Asn-15, Asn-50, Asn-189, and Asn-312 are each glycosylated (N-linked (GlcNAc...) asparagine). The helical transmembrane segment at 342-362 threads the bilayer; it reads IGVVVGTIFAVLLLLALGIVL. Residues 363–745 lie on the Cytoplasmic side of the membrane; it reads CVALRNTRDN…GSDEVARTCV (383 aa). Positions 384–538 constitute a Guanylate cyclase domain; the sequence is TLIFTDIESS…RTPNLAARTE (155 aa). Residues Asp-389 and Asp-432 each contribute to the Mg(2+) site.

It belongs to the adenylyl cyclase class-3 family. Mg(2+) is required as a cofactor.

It localises to the cell membrane. It catalyses the reaction ATP = 3',5'-cyclic AMP + diphosphate. Could act as a receptor for an unknown ligand. In Trypanosoma congolense, this protein is Receptor-type adenylate cyclase.